The following is an 834-amino-acid chain: DNA polymerase I, thermostable (834 aa).

The 5'-3' exonuclease domain maps to 176 to 262 (KPEQWVDFRA…DLPLEVDLAQ (87 aa)). The tract at residues 412-834 (ERLHRNLLKR…MGEDWLSAKG (423 aa)) is polymerase.

Belongs to the DNA polymerase type-A family.

It carries out the reaction DNA(n) + a 2'-deoxyribonucleoside 5'-triphosphate = DNA(n+1) + diphosphate. Its function is as follows. Has 5'-3' exonuclease activity and no 3'-5' exonuclease activity. The sequence is that of DNA polymerase I, thermostable (polA) from Thermus caldophilus.